Here is a 343-residue protein sequence, read N- to C-terminus: Glyceraldehyde-3-phosphate dehydrogenase 1 (343 aa).

NAD(+) contacts are provided by residues 13 to 14 (RI), Asp-35, Arg-79, and Ser-121. D-glyceraldehyde 3-phosphate is bound by residues 154 to 156 (SCT), Thr-185, 214 to 215 (TG), and Arg-237. The active-site Nucleophile is the Cys-155. Asn-319 lines the NAD(+) pocket.

This sequence belongs to the glyceraldehyde-3-phosphate dehydrogenase family. As to quaternary structure, homotetramer.

The protein localises to the cytoplasm. The catalysed reaction is D-glyceraldehyde 3-phosphate + phosphate + NAD(+) = (2R)-3-phospho-glyceroyl phosphate + NADH + H(+). Its pathway is carbohydrate degradation; glycolysis; pyruvate from D-glyceraldehyde 3-phosphate: step 1/5. Catalyzes the oxidative phosphorylation of glyceraldehyde 3-phosphate (G3P) to 1,3-bisphosphoglycerate (BPG) using the cofactor NAD. The first reaction step involves the formation of a hemiacetal intermediate between G3P and a cysteine residue, and this hemiacetal intermediate is then oxidized to a thioester, with concomitant reduction of NAD to NADH. The reduced NADH is then exchanged with the second NAD, and the thioester is attacked by a nucleophilic inorganic phosphate to produce BPG. The protein is Glyceraldehyde-3-phosphate dehydrogenase 1 (gap1) of Trichormus variabilis (strain ATCC 29413 / PCC 7937) (Anabaena variabilis).